We begin with the raw amino-acid sequence, 505 residues long: Hexose transporter 1 (505 aa).

Residues 1-27 are Cytoplasmic-facing; it reads MNILRMDILSRGGTQEIEHRDGFFNTS. The chain crosses the membrane as a helical span at residues 28 to 48; the sequence is FQYVLSACLASFIFGYQVSVL. Over 49–78 the chain is Extracellular; sequence NTIKSYIVVEFEWCSTKTDTSCEDSILKSS. Cysteine 62 and cysteine 70 are oxidised to a cystine. Residues 79–99 traverse the membrane as a helical segment; the sequence is FLLASVFIGAVLGSGFSGYLV. Over 100 to 104 the chain is Cytoplasmic; it reads KFGRR. The helical transmembrane segment at 105–125 threads the bilayer; it reads FSLMVIYIFFIFVSILTAISH. Residues 126–134 are Extracellular-facing; sequence HFHTILYAR. A helical membrane pass occupies residues 135–155; that stretch reads LLSGFGIGLITVSVPMYISEM. Over 156–165 the chain is Cytoplasmic; it reads THKDKKGAYG. A helical membrane pass occupies residues 166-186; it reads VLHQLFITFGIFVAVLLGLFL. Residue glutamine 169 participates in alpha-D-glucose binding. Glutamine 169 is a beta-D-glucose binding site. The Extracellular portion of the chain corresponds to 187 to 208; sequence GDGPKINGKSIELSNFEMFWWR. Residues 209 to 229 traverse the membrane as a helical segment; it reads FMFFLPTIISLLGIILLIAFY. The Cytoplasmic portion of the chain corresponds to 230–294; that stretch reads KEETPYFLYE…SALKIPAYRN (65 aa). A helical transmembrane segment spans residues 295-315; sequence VIILGCILSGFQQFTGINVLV. Alpha-D-glucose is bound by residues glutamine 306, glutamine 307, and asparagine 312. Glutamine 306 lines the beta-D-glucose pocket. Position 312 (asparagine 312) interacts with beta-D-glucose. At 316–332 the chain is on the extracellular side; it reads ANSNELYKEFLDKNLIT. A helical transmembrane segment spans residues 333–353; the sequence is ILSVIMTAVNFLMTFPAIYII. Asparagine 342 lines the beta-D-glucose pocket. Topologically, residues 354 to 358 are cytoplasmic; sequence EKIGR. The chain crosses the membrane as a helical span at residues 359–379; that stretch reads KTLLLGGCIGVICAFLPTVIA. The Extracellular portion of the chain corresponds to 380-393; sequence RQVWGPTKIVNGLS. Residues 394–414 form a helical membrane-spanning segment; the sequence is IAGTFLMIISFAVSYGPVLWI. Alpha-D-glucose is bound at residue tryptophan 413. Residues 415 to 430 are Cytoplasmic-facing; sequence YLHEMYPSEIKDSAAS. A helical transmembrane segment spans residues 431-451; the sequence is LASLINWVCAIIVVFPSDIII. The Extracellular segment spans residues 452 to 456; the sequence is KKSPS. The chain crosses the membrane as a helical span at residues 457-477; it reads ILFMFFSVMCIIAFLFIMFFI. Over 478 to 505 the chain is Cytoplasmic; it reads KETKGGEIGTSPYISLEERQKHIGKSKV.

This sequence belongs to the major facilitator superfamily. Sugar transporter (TC 2.A.1.1) family. Homodimer.

It is found in the cell membrane. The catalysed reaction is D-glucose(out) = D-glucose(in). It carries out the reaction D-fructose(out) = D-fructose(in). The enzyme catalyses D-galactose(in) = D-galactose(out). It catalyses the reaction D-mannose(out) = D-mannose(in). The catalysed reaction is D-glucosamine(out) = D-glucosamine(in). It carries out the reaction D-xylose(out) = D-xylose(in). With respect to regulation, inhibited by cytochalasin B. Functionally, sodium-independent facilitative hexose transporter. Can transport D-glucose and D-fructose. Can transport D-mannose, D-galactose, D-xylose and D-glucosamine. This Plasmodium yoelii yoelii protein is Hexose transporter 1.